A 261-amino-acid chain; its full sequence is 3-methyl-2-oxobutanoate hydroxymethyltransferase (261 aa).

Positions 42 and 81 each coordinate Mg(2+). 3-methyl-2-oxobutanoate contacts are provided by residues 42–43 (DS), aspartate 81, and lysine 110. Residue glutamate 112 coordinates Mg(2+). The active-site Proton acceptor is glutamate 179.

This sequence belongs to the PanB family. In terms of assembly, homodecamer; pentamer of dimers. It depends on Mg(2+) as a cofactor.

The protein resides in the cytoplasm. It carries out the reaction 3-methyl-2-oxobutanoate + (6R)-5,10-methylene-5,6,7,8-tetrahydrofolate + H2O = 2-dehydropantoate + (6S)-5,6,7,8-tetrahydrofolate. It participates in cofactor biosynthesis; coenzyme A biosynthesis. Catalyzes the reversible reaction in which hydroxymethyl group from 5,10-methylenetetrahydrofolate is transferred onto alpha-ketoisovalerate to form ketopantoate. The sequence is that of 3-methyl-2-oxobutanoate hydroxymethyltransferase from Pyrobaculum islandicum (strain DSM 4184 / JCM 9189 / GEO3).